The sequence spans 184 residues: GTP-binding protein Rheb (184 aa).

K8 participates in a covalent cross-link: Glycyl lysine isopeptide (Lys-Gly) (interchain with G-Cter in ubiquitin). GDP contacts are provided by S16 and V17. Residue S16 coordinates GTP. Positions 18, 19, 20, 21, 32, 35, 38, 119, and 122 each coordinate GTP. 3 residues coordinate GDP: K19, S20, and S21. Residue S20 participates in Mg(2+) binding. Positions 35 to 43 (YDPTIENTF) match the Effector region motif. T38 provides a ligand contact to GDP. T38 is a Mg(2+) binding site. D122 serves as a coordination point for GDP. Residue S130 is modified to Phosphoserine; by MAPKAPK5. GDP is bound at residue A150. A150 provides a ligand contact to GTP. C181 carries the post-translational modification Cysteine methyl ester. C181 carries the S-farnesyl cysteine lipid modification. The propeptide at 182 to 184 (SVM) is removed in mature form.

The protein belongs to the small GTPase superfamily. Rheb family. Associates with the mTORC1 complex (MTOR, MLST8 and RPTOR) in a guanyl nucleotide-independent manner. Interacts with TSC2. Interacts with MCRS1; the interaction maintains RHEB at the lysosome in its active GTP-bound form and prevents its interaction with the mTORC1 complex inhibitor TSC2, ensuring activation of the mTORC1 complex by RHEB. Interacts (when prenylated) with PDE6D; this promotes release from membranes. Post-translationally, farnesylation is important for efficiently activating mTORC1-mediated signaling. In terms of processing, polyubiquitinated in response to amino acid, promoting its interaction with MTOR and mTORC1 activation. Deubiquitination by ATXN3 promotes recruitment of the TSC-TBC complex and RHEB inactivation by TSC2. Monoubiquitinated at Lys-8 by RNF152, promoting its association with the TSC-TBC complex. Deubiquitinated at Lys-8 by USP4, promoting mTORC1 activation. Phosphorylation by MAPKAPK5 impairs GTP-binding and inactivation. Expressed at high levels in normal adult cortex as well as a number of peripheral tissues, including lung and intestine.

The protein localises to the endomembrane system. It localises to the lysosome membrane. The protein resides in the golgi apparatus membrane. Its subcellular location is the endoplasmic reticulum membrane. It is found in the cytoplasm. The protein localises to the cytosol. The enzyme catalyses GTP + H2O = GDP + phosphate + H(+). With respect to regulation, alternates between an inactive form bound to GDP and an active form bound to GTP. Inactivated by the TSC-TBC complex via the GTPase activating protein (GAP) domain of TSC2. Autoinhibited by Tyr-35, which constrains the active site conformation, restricting the access of the catalytic Asp-65 to the nucleotide-binding pocket. Functionally, small GTPase that acts as an allosteric activator of the canonical mTORC1 complex, an evolutionarily conserved central nutrient sensor that stimulates anabolic reactions and macromolecule biosynthesis to promote cellular biomass generation and growth. In response to nutrients, growth factors or amino acids, specifically activates the protein kinase activity of MTOR, the catalytic component of the mTORC1 complex: acts by causing a conformational change that allows the alignment of residues in the active site of MTOR, thereby enhancing the phosphorylation of ribosomal protein S6 kinase (RPS6KB1 and RPS6KB2) and EIF4EBP1 (4E-BP1). RHEB is also required for localization of the TSC-TBC complex to lysosomal membranes. In response to starvation, RHEB is inactivated by the TSC-TBC complex, preventing activation of mTORC1. Has low intrinsic GTPase activity. The chain is GTP-binding protein Rheb from Rattus norvegicus (Rat).